The sequence spans 142 residues: Ribosome-binding factor A (142 aa).

Positions 119-142 (ETLGEVQSESDQPTTDETTTVNKT) are disordered. A compositionally biased stretch (polar residues) spans 123-142 (EVQSESDQPTTDETTTVNKT).

The protein belongs to the RbfA family. Monomer. Binds 30S ribosomal subunits, but not 50S ribosomal subunits or 70S ribosomes.

It localises to the cytoplasm. Functionally, one of several proteins that assist in the late maturation steps of the functional core of the 30S ribosomal subunit. Associates with free 30S ribosomal subunits (but not with 30S subunits that are part of 70S ribosomes or polysomes). Required for efficient processing of 16S rRNA. May interact with the 5'-terminal helix region of 16S rRNA. This is Ribosome-binding factor A from Prochlorococcus marinus (strain MIT 9303).